A 160-amino-acid chain; its full sequence is MKRAFERMSMAIAIRNQQKKVKIDLRQIRRRVQKLLRLVDCREKEISLLFVDDEEIQEINQRYLGRNYPTNVISFSLSEGEFSSVNPDVLGDIVISVDTASRDAERGNIPVSDELDFLIIHGLLHILGYNHENNNPEETACMQKKEQELFFLLHGYPLDF.

Residues His-121, His-125, and His-131 each coordinate Zn(2+).

This sequence belongs to the endoribonuclease YbeY family. Requires Zn(2+) as cofactor.

The protein resides in the cytoplasm. Functionally, single strand-specific metallo-endoribonuclease involved in late-stage 70S ribosome quality control and in maturation of the 3' terminus of the 16S rRNA. The sequence is that of Endoribonuclease YbeY from Syntrophus aciditrophicus (strain SB).